The following is a 216-amino-acid chain: Protein shisa-5 (216 aa).

The signal sequence occupies residues 1–26; the sequence is MAAPAPAPRILVLLLLLLPAPEGAQS. The Extracellular portion of the chain corresponds to 27–93; the sequence is ELCMISHGRK…SGFDSDPVAR (67 aa). The chain crosses the membrane as a helical span at residues 94-114; the sequence is FGTVIAIGVTLFVIAVVTVIV. The Cytoplasmic segment spans residues 115–216; sequence CCTCSCCCLY…AYMEPPKAVP (102 aa).

It belongs to the shisa family. Interacts with PDCD6; PDCD6 can stabilize SHISA5.

The protein localises to the endoplasmic reticulum membrane. The protein resides in the nucleus membrane. Its function is as follows. Can induce apoptosis in a caspase-dependent manner and plays a role in p53/TP53-dependent apoptosis. This is Protein shisa-5 (SHISA5) from Bos taurus (Bovine).